The chain runs to 264 residues: Meiotic recombination protein REC102 (264 aa).

Belongs to the TOP6B-like family. As to quaternary structure, interacts with REC104; seems to form a functional unit with REC104. REC102-REC104 interacts with SKI8-SPO11 and this interaction is required for proper subcellular location of the proteins during the initiation of recombination. Interacts with MEI4, REC114 and SPO11.

The protein localises to the nucleus. In terms of biological role, required for formation of the SPO11-mediated double-strand breaks (DSBs) that initiate meiotic recombination. May mediate the interaction between SPO11 subunits during meiosis. Also needed for homolog chromosome pairing, synaptonemal complex formation, and for the proper timing of the first meiotic division. Not required for mitosis and mitotic DNA repair mechanisms. The sequence is that of Meiotic recombination protein REC102 from Saccharomyces cerevisiae (strain ATCC 204508 / S288c) (Baker's yeast).